The following is a 142-amino-acid chain: Large ribosomal subunit protein bL19 (142 aa).

It belongs to the bacterial ribosomal protein bL19 family.

Its function is as follows. This protein is located at the 30S-50S ribosomal subunit interface and may play a role in the structure and function of the aminoacyl-tRNA binding site. This chain is Large ribosomal subunit protein bL19, found in Psychrobacter cryohalolentis (strain ATCC BAA-1226 / DSM 17306 / VKM B-2378 / K5).